We begin with the raw amino-acid sequence, 329 residues long: SLAM family member 5 (329 aa).

A signal peptide spans 1–21 (MAQRHLWIWFLCLQTWSEAAG). Residues 22-221 (KDADPMVMNG…TPSFHPRHAV (200 aa)) are Extracellular-facing. Residues 26–129 (PMVMNGILGE…IYYLHIYRRL (104 aa)) enclose the Ig-like V-type domain. Residues 132-206 (PKITQSLISS…SNSSDSVTVQ (75 aa)) enclose the Ig-like C2-type domain. Asparagine 147 carries an N-linked (GlcNAc...) asparagine glycan. A disulfide bridge links cysteine 152 with cysteine 190. The chain crosses the membrane as a helical span at residues 222–242 (LPGGLAVLFLLILIPMLAFLF). Residues 243–329 (RLYKRRRDRI…PKALGNEIVV (87 aa)) are Cytoplasmic-facing. The ITSM 1 signature appears at 263–268 (TVYAVV). Tyrosine 265 carries the phosphotyrosine modification. Tyrosine 280 carries the phosphotyrosine; by LYN modification. The ITSM 2 motif lies at 298-303 (TIYSSV). Tyrosine 300 is subject to Phosphotyrosine.

Homodimer; via its extracellular domain. Forms a head to tail dimer with a CD48 molecule from another cell. Interacts with SH2 domain-containing proteins SH2D1A/SAP and SH2D1B/EAT-2. Interacts with tyrosine-protein phosphatases PTPN6/SHP-1 and PTPN11/SHP-2 via its phosphorylated cytoplasmic domain, and this interaction is blocked by SH2D1A. Post-translationally, phosphorylated by tyrosine-protein kinase LCK on tyrosine residues following ligation induced by agonist monoclonal antibody. The association with SH2D1A/SAP is dependent of tyrosine phosphorylation of its cytoplasmic domain. Phosphorylated on Tyr-280 and Tyr-300 following platelet aggregation. Phosphorylated on tyrosine residues upon high affinity immunoglobulin epsilon receptor aggregation in mast cells. In terms of processing, N-glycosylated. As to expression, predominantly expressed in hematopoietic tissues such as lymph node, spleen, thymus, and bone marrow. Detected also in lung.

Its subcellular location is the cell membrane. Its function is as follows. Self-ligand receptor of the signaling lymphocytic activation molecule (SLAM) family. SLAM receptors triggered by homo- or heterotypic cell-cell interactions are modulating the activation and differentiation of a wide variety of immune cells and thus are involved in the regulation and interconnection of both innate and adaptive immune response. Activities are controlled by presence or absence of small cytoplasmic adapter proteins, SH2D1A/SAP and/or SH2D1B/EAT-2. Can mediate natural killer (NK) cell cytotoxicity dependent on SH2D1A and SH2D1B. Increases proliferative responses of activated T-cells and SH2D1A/SAP does not seen be required for this process. Homophilic interactions enhance interferon gamma/IFNG secretion in lymphocytes and induce platelet stimulation via a SH2D1A/SAP-dependent pathway. May serve as a marker for hematopoietic progenitor cells. Required for a prolonged T-cell:B-cell contact, optimal T follicular helper function, and germinal center formation. In germinal centers involved in maintaining B cell tolerance and in preventing autoimmunity. In mast cells negatively regulates high affinity immunoglobulin epsilon receptor signaling; independent of SH2D1A and SH2D1B but implicating FES and PTPN6/SHP-1. In macrophages enhances LPS-induced MAPK phosphorylation and NF-kappaB activation and modulates LPS-induced cytokine secretion; involving ITSM 2. Positively regulates macroautophagy in primary dendritic cells via stabilization of IRF8; inhibits TRIM21-mediated proteasomal degradation of IRF8. The polypeptide is SLAM family member 5 (Cd84) (Mus musculus (Mouse)).